Consider the following 121-residue polypeptide: uncharacterized protein (121 aa).

The stretch at 8 to 37 forms a coiled coil; it reads KQLMVCRDEIKKLKLKEKEAKNRILTYLKN.

This is an uncharacterized protein from Aedes vexans (Inland floodwater mosquito).